Reading from the N-terminus, the 181-residue chain is Adenine phosphoribosyltransferase (181 aa).

This sequence belongs to the purine/pyrimidine phosphoribosyltransferase family. Homodimer.

It is found in the cytoplasm. It catalyses the reaction AMP + diphosphate = 5-phospho-alpha-D-ribose 1-diphosphate + adenine. It participates in purine metabolism; AMP biosynthesis via salvage pathway; AMP from adenine: step 1/1. Catalyzes a salvage reaction resulting in the formation of AMP, that is energically less costly than de novo synthesis. This Vibrio campbellii (strain ATCC BAA-1116) protein is Adenine phosphoribosyltransferase.